The sequence spans 397 residues: Elongation factor Tu (397 aa).

A tr-type G domain is found at 10-206; sequence KPHVNIGTIG…AVDEYIPTPE (197 aa). Residues 19–26 form a G1 region; the sequence is GHVDHGKT. 19-26 is a binding site for GTP; it reads GHVDHGKT. Mg(2+) is bound at residue T26. Residues 60-64 are G2; it reads GITIS. Residues 81 to 84 are G3; sequence DCPG. Residues 81–85 and 136–139 contribute to the GTP site; these read DCPGH and NKAD. The interval 136–139 is G4; sequence NKAD. Residues 174–176 are G5; that stretch reads SAL.

It belongs to the TRAFAC class translation factor GTPase superfamily. Classic translation factor GTPase family. EF-Tu/EF-1A subfamily. As to quaternary structure, monomer.

The protein resides in the cytoplasm. It catalyses the reaction GTP + H2O = GDP + phosphate + H(+). In terms of biological role, GTP hydrolase that promotes the GTP-dependent binding of aminoacyl-tRNA to the A-site of ribosomes during protein biosynthesis. In Clostridium tetani (strain Massachusetts / E88), this protein is Elongation factor Tu.